The sequence spans 655 residues: DNA-directed RNA polymerase III subunit rpc3 (655 aa).

Disordered regions lie at residues 153–183 (VKAN…SNEQ), 270–305 (KRKY…EENE), and 402–445 (RLDL…SSGG). Positions 276–287 (RRADEPNKKPRT) are enriched in basic and acidic residues. A compositionally biased stretch (acidic residues) spans 291–305 (SVDEIDEQDEEEENE). The segment covering 405 to 417 (LSSSTGPMDTSQP) has biased composition (polar residues). A compositionally biased stretch (basic and acidic residues) spans 418 to 427 (DGRRGKRPLE). The tract at residues 582-603 (TYKAMSRCLQRLRFERSRIKDF) is leucine-zipper.

Belongs to the RNA polymerase beta chain family. In terms of assembly, component of the RNA polymerase III (Pol III) complex consisting of 17 subunits.

It is found in the nucleus. DNA-dependent RNA polymerase catalyzes the transcription of DNA into RNA using the four ribonucleoside triphosphates as substrates. Specific core component of RNA polymerase III which synthesizes small RNAs, such as 5S rRNA and tRNAs. The protein is DNA-directed RNA polymerase III subunit rpc3 (rpc82) of Neosartorya fischeri (strain ATCC 1020 / DSM 3700 / CBS 544.65 / FGSC A1164 / JCM 1740 / NRRL 181 / WB 181) (Aspergillus fischerianus).